Reading from the N-terminus, the 30-residue chain is Babycurus-toxin 1 (30 aa).

Residues 2 to 30 form the LCN-type CS-alpha/beta domain; it reads KDGYPTNSKGCKISGCLPGENKFCLNECQ.

The protein belongs to the long (4 C-C) scorpion toxin superfamily. Sodium channel inhibitor family. In terms of tissue distribution, expressed by the venom gland.

It is found in the secreted. In terms of biological role, binds to sodium channels (Nav) and inhibits both the activation and inactivation of the activated channels, thereby blocking neuronal transmission. The protein is Babycurus-toxin 1 of Babycurus centrurimorphus (East African scorpion).